The sequence spans 262 residues: DNA repair protein RecO (262 aa).

It belongs to the RecO family.

Its function is as follows. Involved in DNA repair and RecF pathway recombination. The polypeptide is DNA repair protein RecO (Acidovorax ebreus (strain TPSY) (Diaphorobacter sp. (strain TPSY))).